The sequence spans 488 residues: Probable malate:quinone oxidoreductase (488 aa).

It belongs to the MQO family. Requires FAD as cofactor.

The enzyme catalyses (S)-malate + a quinone = a quinol + oxaloacetate. The protein operates within carbohydrate metabolism; tricarboxylic acid cycle; oxaloacetate from (S)-malate (quinone route): step 1/1. This chain is Probable malate:quinone oxidoreductase, found in Neisseria meningitidis serogroup B (strain ATCC BAA-335 / MC58).